Consider the following 339-residue polypeptide: DNA-directed RNA polymerase subunit alpha (339 aa).

The segment at 1–233 is alpha N-terminal domain (alpha-NTD); it reads MVREEIAVAT…DLFIPFLHAE (233 aa). An alpha C-terminal domain (alpha-CTD) region spans residues 267-339; the sequence is KKMALKSIFI…FGFDLPKNGK (73 aa).

Belongs to the RNA polymerase alpha chain family. In terms of assembly, in plastids the minimal PEP RNA polymerase catalytic core is composed of four subunits: alpha, beta, beta', and beta''. When a (nuclear-encoded) sigma factor is associated with the core the holoenzyme is formed, which can initiate transcription.

The protein resides in the plastid. Its subcellular location is the chloroplast. It catalyses the reaction RNA(n) + a ribonucleoside 5'-triphosphate = RNA(n+1) + diphosphate. In terms of biological role, DNA-dependent RNA polymerase catalyzes the transcription of DNA into RNA using the four ribonucleoside triphosphates as substrates. The chain is DNA-directed RNA polymerase subunit alpha from Piper cenocladum (Ant piper).